Consider the following 1135-residue polypeptide: Receptor-type guanylate cyclase gcy-4 (1135 aa).

The N-terminal stretch at 1 to 20 is a signal peptide; the sequence is MTQLLRFLLILSIFCDFSHS. Residues 21-483 are Extracellular-facing; that stretch reads QRPTIRVGIA…CPIPFFDQYR (463 aa). N-linked (GlcNAc...) asparagine glycosylation is found at Asn37, Asn193, Asn209, Asn251, Asn349, Asn375, Asn431, Asn436, and Asn447. A helical transmembrane segment spans residues 484–504; the sequence is LLIFVFVIVAGLLILAIFTCL. At 505-1135 the chain is on the cytoplasmic side; it reads TSMVRNQRAE…VMRREMMRVS (631 aa). Positions 535–560 are disordered; that stretch reads KGRRLSTDSENSTVTKSSKGSSSKNF. The Protein kinase domain maps to 545–837; that stretch reads NSTVTKSSKG…KDNLMDHVFS (293 aa). The span at 546–560 shows a compositional bias: low complexity; that stretch reads STVTKSSKGSSSKNF. The Guanylate cyclase domain occupies 895 to 1025; that stretch reads TVFFSDLVKF…DTVNTASRME (131 aa).

This sequence belongs to the adenylyl cyclase class-4/guanylyl cyclase family. Expressed bilaterally in ASE neurons.

It is found in the cell membrane. The catalysed reaction is GTP = 3',5'-cyclic GMP + diphosphate. Its function is as follows. Guanylate cyclase involved in the production of the second messenger cGMP. Regulates chemotaxis responses toward salt ions in ASE sensory neurons. The protein is Receptor-type guanylate cyclase gcy-4 of Caenorhabditis briggsae.